A 130-amino-acid polypeptide reads, in one-letter code: Small ribosomal subunit protein uS11 (130 aa).

The protein belongs to the universal ribosomal protein uS11 family. Part of the 30S ribosomal subunit. Interacts with proteins S7 and S18. Binds to IF-3.

Its function is as follows. Located on the platform of the 30S subunit, it bridges several disparate RNA helices of the 16S rRNA. Forms part of the Shine-Dalgarno cleft in the 70S ribosome. The polypeptide is Small ribosomal subunit protein uS11 (Thermoanaerobacter sp. (strain X514)).